A 520-amino-acid chain; its full sequence is Amine oxidase [flavin-containing] B (520 aa).

Ser-2 is modified (N-acetylserine). Residues 2 to 489 are Cytoplasmic-facing; that stretch reads SSKCDVVVVG…TFLQRHLPSV (488 aa). Position 52 is an N6-acetyllysine (Lys-52). S-8alpha-FAD cysteine is present on Cys-397. A helical; Anchor for type IV membrane protein transmembrane segment spans residues 490-516; it reads PGLLKLIGLTTIFSATALGFLAHKRGL. The Mitochondrial intermembrane portion of the chain corresponds to 517–520; it reads LVRI.

As to quaternary structure, monomer, homo- or heterodimer (containing two subunits of similar size). Each subunit contains a covalently bound flavin. Enzymatically active as monomer. The cofactor is FAD.

It is found in the mitochondrion outer membrane. It catalyses the reaction a secondary aliphatic amine + O2 + H2O = a primary amine + an aldehyde + H2O2. It carries out the reaction a primary methyl amine + O2 + H2O = an aldehyde + H2O2 + NH4(+). The enzyme catalyses benzylamine + O2 + H2O = benzaldehyde + H2O2 + NH4(+). The catalysed reaction is (R)-adrenaline + O2 + H2O = (R)-3,4-dihydroxymandelaldehyde + methylamine + H2O2. It catalyses the reaction dopamine + O2 + H2O = 3,4-dihydroxyphenylacetaldehyde + H2O2 + NH4(+). It carries out the reaction tyramine + O2 + H2O = (4-hydroxyphenyl)acetaldehyde + H2O2 + NH4(+). The enzyme catalyses (R)-noradrenaline + O2 + H2O = (R)-3,4-dihydroxymandelaldehyde + H2O2 + NH4(+). The catalysed reaction is 2-phenylethylamine + O2 + H2O = 2-phenylacetaldehyde + H2O2 + NH4(+). It catalyses the reaction N-acetylputrescine + O2 + H2O = 4-acetamidobutanal + H2O2 + NH4(+). In terms of biological role, catalyzes the oxidative deamination of primary and some secondary amines such as neurotransmitters, and exogenous amines including the tertiary amine, neurotoxin 1-methyl-4-phenyl-1,2,3,6-tetrahydropyridine (MPTP), with concomitant reduction of oxygen to hydrogen peroxide and participates in the metabolism of neuroactive and vasoactive amines in the central nervous system and peripheral tissues. Preferentially degrades benzylamine and phenylethylamine. The polypeptide is Amine oxidase [flavin-containing] B (Bos taurus (Bovine)).